Here is a 572-residue protein sequence, read N- to C-terminus: Proline dehydrogenase 1, mitochondrial (572 aa).

Residues 105-124 show a composition bias toward low complexity; sequence NHSNQTNNVNNKNYNNNNNN. A disordered region spans residues 105 to 140; that stretch reads NHSNQTNNVNNKNYNNNNNNFEKDDKFGPPNNQNNN.

It belongs to the proline oxidase family. It depends on FAD as a cofactor.

The protein resides in the mitochondrion matrix. It catalyses the reaction L-proline + a quinone = (S)-1-pyrroline-5-carboxylate + a quinol + H(+). It participates in amino-acid degradation; L-proline degradation into L-glutamate; L-glutamate from L-proline: step 1/2. Functionally, converts proline to delta-1-pyrroline-5-carboxylate. The sequence is that of Proline dehydrogenase 1, mitochondrial (prodh) from Dictyostelium discoideum (Social amoeba).